Consider the following 442-residue polypeptide: ATP-dependent protease ATPase subunit HslU (442 aa).

ATP-binding positions include Ile-18, 60–65 (GVGKTE), Asp-255, Glu-320, and Arg-392.

This sequence belongs to the ClpX chaperone family. HslU subfamily. A double ring-shaped homohexamer of HslV is capped on each side by a ring-shaped HslU homohexamer. The assembly of the HslU/HslV complex is dependent on binding of ATP.

Its subcellular location is the cytoplasm. Its function is as follows. ATPase subunit of a proteasome-like degradation complex; this subunit has chaperone activity. The binding of ATP and its subsequent hydrolysis by HslU are essential for unfolding of protein substrates subsequently hydrolyzed by HslV. HslU recognizes the N-terminal part of its protein substrates and unfolds these before they are guided to HslV for hydrolysis. This chain is ATP-dependent protease ATPase subunit HslU, found in Aeromonas salmonicida (strain A449).